A 423-amino-acid chain; its full sequence is Ribosome biogenesis protein WDR12 homolog (423 aa).

A ubiquitin-like (UBL) domain region spans residues 10–93; it reads VQVHLKTKQE…EDAIEIEYVE (84 aa). WD repeat units lie at residues 105–142, 144–186, 193–232, 253–291, 293–332, 338–378, and 382–420; these read LHDD…ILTI, GHTA…NAVE, GHER…AGGD, GHRE…IKTE, STNK…GSIV, GHNA…APLY, and GHGE…VETM.

This sequence belongs to the WD repeat WDR12/YTM1 family.

It localises to the nucleus. Its subcellular location is the nucleolus. It is found in the nucleoplasm. Its function is as follows. Required for maturation of ribosomal RNAs and formation of the large ribosomal subunit. The sequence is that of Ribosome biogenesis protein WDR12 homolog from Drosophila willistoni (Fruit fly).